The following is a 20-amino-acid chain: Unknown protein NF009 from 2D-PAGE (20 aa).

A disordered region spans residues 1 to 20 (ATSAAQGAALDESVRKVLKP).

This chain is Unknown protein NF009 from 2D-PAGE, found in Naegleria fowleri (Brain eating amoeba).